The chain runs to 625 residues: Chaperone protein HtpG (625 aa).

The a; substrate-binding stretch occupies residues 1 to 337; that stretch reads MSTNQETRGF…TNDLPLNVSR (337 aa). The segment at 338–554 is b; the sequence is EILQENKITA…NDEMTTQMAK (217 aa). A c region spans residues 555 to 625; sequence LFAAMGQKAP…FIKRMNKLLG (71 aa).

This sequence belongs to the heat shock protein 90 family. As to quaternary structure, homodimer.

It localises to the cytoplasm. Molecular chaperone. Has ATPase activity. The protein is Chaperone protein HtpG of Actinobacillus pleuropneumoniae serotype 3 (strain JL03).